The chain runs to 184 residues: ATP synthase subunit b, chloroplastic (184 aa).

The helical transmembrane segment at 27–49 (LATNLINLSVVLGVLIFFGKGVL) threads the bilayer.

Belongs to the ATPase B chain family. As to quaternary structure, F-type ATPases have 2 components, F(1) - the catalytic core - and F(0) - the membrane proton channel. F(1) has five subunits: alpha(3), beta(3), gamma(1), delta(1), epsilon(1). F(0) has four main subunits: a(1), b(1), b'(1) and c(10-14). The alpha and beta chains form an alternating ring which encloses part of the gamma chain. F(1) is attached to F(0) by a central stalk formed by the gamma and epsilon chains, while a peripheral stalk is formed by the delta, b and b' chains.

The protein localises to the plastid. The protein resides in the chloroplast thylakoid membrane. In terms of biological role, f(1)F(0) ATP synthase produces ATP from ADP in the presence of a proton or sodium gradient. F-type ATPases consist of two structural domains, F(1) containing the extramembraneous catalytic core and F(0) containing the membrane proton channel, linked together by a central stalk and a peripheral stalk. During catalysis, ATP synthesis in the catalytic domain of F(1) is coupled via a rotary mechanism of the central stalk subunits to proton translocation. Component of the F(0) channel, it forms part of the peripheral stalk, linking F(1) to F(0). In Spinacia oleracea (Spinach), this protein is ATP synthase subunit b, chloroplastic.